We begin with the raw amino-acid sequence, 776 residues long: E3 ubiquitin-protein ligase UHRF1 (776 aa).

The 78-residue stretch at 1-78 folds into the Ubiquitin-like domain; sequence MWIQVRTMDG…VQLLVRQAVA (78 aa). Residues 88–126 are disordered; the sequence is AELSDSDSGCGSAQSESDKGSTHGESDVQSAGASGQTDT. Over residues 93–102 the composition is skewed to polar residues; sequence SDSGCGSAQS. The segment covering 103 to 113 has biased composition (basic and acidic residues); sequence ESDKGSTHGES. The segment covering 114–126 has biased composition (polar residues); it reads DVQSAGASGQTDT. Tudor-like stretches follow at residues 135-201 and 208-277; these read GFYK…PRAR and QLEP…IEEP. Residues 278-298 form a disordered region; it reads GSAEGPGASSDSPLKKGSNGP. A linker region spans residues 290-299; sequence PLKKGSNGPE. The PHD-type zinc-finger motif lies at 297 to 364; the sequence is GPECKVCKDD…DWYCPDCRND (68 aa). Histone H3R2me0 binding regions lie at residues 331–335 and 351–353; these read CDECD and PDD. The YDG domain occupies 417–580; the sequence is GPVPGVPVGT…FLVWRYLLKR (164 aa). The interval 443–444 is required to promote base flipping; that stretch reads HV. Residues 461-462 and D467 each bind DNA; that span reads AG. 2 required for formation of a 5-methylcytosine-binding pocket regions span residues 464-467 and 476-479; these read YEDD and YTGS. The segment at 617–660 is disordered; the sequence is EKEKENKNEDDIEETPTKGKRKRKSQSMEEKSSPTKGTPKKMKV. S649 is modified (phosphoserine; by CDK2). Residues 706–745 form an RING-type zinc finger; that stretch reads CICCQEVVYQPITTECQHNVCRECLQRSFKAKVYTCPACR.

Phosphorylation at Ser-649 is required for gastrulation. In terms of tissue distribution, expressed in proliferating tissues. Highly expressed 24-48 hours after fertilization (hpf) in rapidly proliferating tissues, including the tectum, retina and brachial arches. Preferentially expressed in the liver bud and expression is maintained in the fully developed liver. Also expressed in the proximal gut. In adult, the highest expression is detected in testis.

The protein resides in the nucleus. It is found in the cytoplasm. The catalysed reaction is S-ubiquitinyl-[E2 ubiquitin-conjugating enzyme]-L-cysteine + [acceptor protein]-L-lysine = [E2 ubiquitin-conjugating enzyme]-L-cysteine + N(6)-ubiquitinyl-[acceptor protein]-L-lysine.. Its pathway is protein modification; protein ubiquitination. Multidomain protein that acts as a key epigenetic regulator by bridging DNA methylation and chromatin modification. Specifically recognizes and binds hemimethylated DNA at replication forks via its YDG domain and recruits dnmt1 methyltransferase to ensure faithful propagation of the DNA methylation patterns through DNA replication. In addition to its role in maintenance of DNA methylation, also plays a key role in chromatin modification: through its tudor-like regions and PHD-type zinc fingers, specifically recognizes and binds histone H3 trimethylated at 'Lys-9' (H3K9me3) and unmethylated at 'Arg-2' (H3R2me0), respectively, and recruits chromatin proteins. Enriched in pericentric heterochromatin where it recruits different chromatin modifiers required for this chromatin replication. Also localizes to euchromatic regions where it negatively regulates transcription possibly by impacting DNA methylation and histone modifications. Has E3 ubiquitin-protein ligase activity by mediating the ubiquitination of target proteins. However, it is still unclear how E3 ubiquitin-protein ligase activity is related to its role in chromatin in vivo. Required for pregastrula and lens development. The polypeptide is E3 ubiquitin-protein ligase UHRF1 (uhrf1) (Danio rerio (Zebrafish)).